A 296-amino-acid polypeptide reads, in one-letter code: Prostate androgen-regulated mucin-like protein 1 homolog (296 aa).

An N-terminal signal peptide occupies residues 1–20; the sequence is MVCKVLIALCIFTAGLRVQG. Over 21 to 244 the chain is Extracellular; it reads SPTVPLPVSL…EVENALSSGS (224 aa). N-linked (GlcNAc...) asparagine glycosylation is found at Asn61 and Asn95. The segment at 72–220 is disordered; that stretch reads LTSQLPTDHR…SPQDTEPGKV (149 aa). Positions 78–95 are enriched in basic and acidic residues; it reads TDHREEAVTSPPLKRDVN. The span at 96–110 shows a compositional bias: polar residues; the sequence is STDSSPAGFPSTSSD. Over residues 139 to 167 the composition is skewed to low complexity; it reads LLSSQAPTSATTSPATSLSESLSASVTSS. Positions 168 to 177 are enriched in polar residues; sequence HNSTVANIQP. N-linked (GlcNAc...) asparagine glycosylation is present at Asn169. Residues 206-217 show a composition bias toward basic and acidic residues; it reads VPKEKSPQDTEP. A helical transmembrane segment spans residues 245–265; that stretch reads IAAITVTVIAVVLLVFGGAAY. The Cytoplasmic portion of the chain corresponds to 266-296; that stretch reads LKIRHSSYGRLLDDHDYGSWGNYNNPLYDDS. Ser284 carries the post-translational modification Phosphoserine.

Belongs to the PARM family. Post-translationally, highly N-glycosylated and O-glycosylated.

The protein localises to the cell membrane. It localises to the golgi apparatus membrane. The protein resides in the endosome membrane. Its function is as follows. May regulate TLP1 expression and telomerase activity, thus enabling certain prostatic cells to resist apoptosis. The polypeptide is Prostate androgen-regulated mucin-like protein 1 homolog (Parm1) (Mus musculus (Mouse)).